Here is a 400-residue protein sequence, read N- to C-terminus: Nicotinate phosphoribosyltransferase (400 aa).

His220 bears the Phosphohistidine; by autocatalysis mark.

It belongs to the NAPRTase family. Post-translationally, transiently phosphorylated on a His residue during the reaction cycle. Phosphorylation strongly increases the affinity for substrates and increases the rate of nicotinate D-ribonucleotide production. Dephosphorylation regenerates the low-affinity form of the enzyme, leading to product release.

It catalyses the reaction nicotinate + 5-phospho-alpha-D-ribose 1-diphosphate + ATP + H2O = nicotinate beta-D-ribonucleotide + ADP + phosphate + diphosphate. Its pathway is cofactor biosynthesis; NAD(+) biosynthesis; nicotinate D-ribonucleotide from nicotinate: step 1/1. Catalyzes the synthesis of beta-nicotinate D-ribonucleotide from nicotinate and 5-phospho-D-ribose 1-phosphate at the expense of ATP. This Escherichia coli O45:K1 (strain S88 / ExPEC) protein is Nicotinate phosphoribosyltransferase.